The sequence spans 239 residues: MKVTLFVTCLVDMFETNVGKATVEVLERLGCEIEFPEAQVCCGQPAYNSGHVEAAKEAMKHMIETFEDAEYIVTPSGSCATMFHEYPHVFKDDPKWAKRAQKVADKTYEFTQFIVDVLKVTDVGASLPGIATIHKSCHMTRLLGVKEAPGILLSSVKGLIVRELPNVQNCCGFGGTFSVKMTPISEQMVDEKVDSVMETGADYLIGADCGCLLNIGGRIERLGKEVKVMHIAEVLNSRS.

This sequence belongs to the LutA/YkgE family.

In terms of biological role, is involved in L-lactate degradation and allows cells to grow with lactate as the sole carbon source. The chain is Lactate utilization protein A 2 from Bacillus mycoides (strain KBAB4) (Bacillus weihenstephanensis).